A 304-amino-acid chain; its full sequence is tRNA (guanine(9)-N1)-methyltransferase (304 aa).

Composition is skewed to basic and acidic residues over residues 1-26 and 42-72; these read MENK…KNET and RQQE…KRKI. Residues 1 to 72 form a disordered region; it reads MENKDALDIG…LRKEERKRKI (72 aa). The SAM-dependent MTase TRM10-type domain occupies 81–276; that stretch reads QKKRIRLGKV…EVIPKRKGIL (196 aa). S-adenosyl-L-methionine-binding positions include Leu-183, Gly-203, 207–211, Cys-215, Leu-229, and 241–243; these read DKNRY and KIL. The active-site Proton acceptor is the Asp-207. The interval 282–304 is disordered; sequence SFDVSEDTRSQSNQSDSELEKEN. A Phosphoserine modification is found at Ser-296.

This sequence belongs to the class IV-like SAM-binding methyltransferase superfamily. TRM10 family. As to quaternary structure, monomer.

It is found in the cytoplasm. It localises to the nucleus. The enzyme catalyses guanosine(9) in tRNA + S-adenosyl-L-methionine = N(1)-methylguanosine(9) in tRNA + S-adenosyl-L-homocysteine + H(+). S-adenosyl-L-methionine-dependent guanine N(1)-methyltransferase that catalyzes the formation of N(1)-methylguanine at position 9 (m1G9) in cytoplasmic tRNA. The chain is tRNA (guanine(9)-N1)-methyltransferase from Schizosaccharomyces pombe (strain 972 / ATCC 24843) (Fission yeast).